The primary structure comprises 431 residues: Putative F-box/FBD/LRR-repeat protein At3g56780 (431 aa).

In terms of domain architecture, F-box spans 6–62 (CSCINELPDDLILKILSFVSTKHVVVTSLLSKKWKSLWTRVPILKYDVRDHTRFERF). LRR repeat units follow at residues 56 to 82 (HTRFERFLDKSLFSHQSHVLESLHVEL), 88 to 113 (NKDIGPWIRTALHHHHCHLRELEIDA), 135 to 161 (LKGIVIDVEAPLTTVSLPSLKTLHIDH), 162 to 187 (SSLFDFGSLQMLLSNCNFITDLMVIR), 209 to 236 (LEGLKDVISISSSSAVCLPLLKTLHVAR), 237 to 262 (MEDFNNDSFCRLLSNCPVLSDLTLEE), 264 to 285 (TSDVLLNLDIDMPYLQRLSIIT), and 357 to 382 (CSERSVEMLVDLLLCFTKLVVLKLEH). Residues 391–423 (RWEPPSLVPECLLSSLEALEWKGYTGRYGDKDL) form the FBD domain.

This Arabidopsis thaliana (Mouse-ear cress) protein is Putative F-box/FBD/LRR-repeat protein At3g56780.